We begin with the raw amino-acid sequence, 758 residues long: Spastin (758 aa).

The disordered stretch occupies residues 1–99 (MVRTKNQSSS…PTTCSPRSGH (99 aa)). The Cytoplasmic portion of the chain corresponds to 1-121 (MVRTKNQSSS…KQNLYVVSFP (121 aa)). The segment at 1 to 210 (MVRTKNQSSS…RPIQPLEMAA (210 aa)) is required for localization to punctate cytoplasmic foci. Low complexity-rich tracts occupy residues 8-29 (SSSS…SATG), 43-58 (RSSS…AGGS), 66-76 (SSNRRSPGSSP), and 85-95 (TDDLTPTTCSP). The helical intramembrane region spans 122–142 (IIFLFNVLRSLIYQLFCIFRY). Residues 143 to 758 (LYGASTKVIY…WSQDYGDITI (616 aa)) lie on the Cytoplasmic side of the membrane. 2 stretches are compositionally biased toward polar residues: residues 169–180 (SKEQQQSLNHPS) and 189–198 (QEQQLSNQPQ). The tract at residues 169-221 (SKEQQQSLNHPSELNRDSDGQEQQLSNQPQRFRPIQPLEMAANRPGGGYSPGP) is disordered. Residues 208-758 (MAANRPGGGY…WSQDYGDITI (551 aa)) form a sufficient for interaction with microtubules and microtubule severing region. The 76-residue stretch at 233-308 (HRRAFEYISK…SMARDRLHFL (76 aa)) folds into the MIT domain. Disordered stretches follow at residues 353–376 (RVRS…GRKL) and 390–454 (NKSQ…ASTP). 2 stretches are compositionally biased toward polar residues: residues 390–406 (NKSQ…TSVG) and 425–454 (QFSS…ASTP). Residues 443 to 455 (NNGPSGSGASTPV) are required for interaction with microtubules. 523–530 (GPPGNGKT) contributes to the ATP binding site.

This sequence belongs to the AAA ATPase family. Spastin subfamily. Homohexamer. The homohexamer is stabilized by ATP-binding. The homohexamer may adopt a ring conformation through which microtubules pass prior to being severed. Interacts with microtubules. Interacts with atl; may be involved in microtubule dynamics.

It localises to the membrane. It is found in the cytoplasm. Its subcellular location is the cytoskeleton. The protein resides in the microtubule organizing center. The protein localises to the centrosome. It localises to the chromosome. It is found in the lipid droplet. It catalyses the reaction n ATP + n H2O + a microtubule = n ADP + n phosphate + (n+1) alpha/beta tubulin heterodimers.. Its function is as follows. ATP-dependent microtubule severing protein. Stimulates microtubule minus-end depolymerization and poleward microtubule flux in the mitotic spindle. Regulates microtubule stability in the neuromuscular junction synapse. Involved in lipid metabolism by regulating the size and distribution of lipid droplets. Involved in axon regeneration by regulating microtubule severing. The chain is Spastin from Drosophila yakuba (Fruit fly).